A 228-amino-acid chain; its full sequence is Translation initiation factor 6 (228 aa).

This sequence belongs to the eIF-6 family.

Binds to the 50S ribosomal subunit and prevents its association with the 30S ribosomal subunit to form the 70S initiation complex. The protein is Translation initiation factor 6 of Thermococcus gammatolerans (strain DSM 15229 / JCM 11827 / EJ3).